Reading from the N-terminus, the 311-residue chain is S-adenosyl-L-methionine-dependent tRNA 4-demethylwyosine synthase (311 aa).

Positions 26, 39, 52, 62, 66, and 69 each coordinate [4Fe-4S] cluster. The Radical SAM core domain maps to 45 to 283 (YGIETHRCIQ…LKLAKMLDEN (239 aa)).

The protein belongs to the TYW1 family. Monomer. Requires [4Fe-4S] cluster as cofactor.

It localises to the cytoplasm. It catalyses the reaction N(1)-methylguanosine(37) in tRNA(Phe) + pyruvate + S-adenosyl-L-methionine = 4-demethylwyosine(37) in tRNA(Phe) + 5'-deoxyadenosine + L-methionine + CO2 + H2O. Functionally, component of the wyosine derivatives biosynthesis pathway that catalyzes the condensation of N-methylguanine with 2 carbon atoms from pyruvate to form the tricyclic 4-demethylwyosine (imG-14) on guanosine-37 of tRNA(Phe). In Methanocaldococcus jannaschii (strain ATCC 43067 / DSM 2661 / JAL-1 / JCM 10045 / NBRC 100440) (Methanococcus jannaschii), this protein is S-adenosyl-L-methionine-dependent tRNA 4-demethylwyosine synthase.